Reading from the N-terminus, the 444-residue chain is Acyl-CoA 6-desaturase (444 aa).

Over 1–131 (MGKGGNQGEG…DMNLFKTNHV (131 aa)) the chain is Cytoplasmic. One can recognise a Cytochrome b5 heme-binding domain in the interval 18-95 (MPTFSWEEIQ…LKPLLIGELA (78 aa)). A helical membrane pass occupies residues 132 to 152 (FFLLLLAHIIALESIAWFTVF). The Lumenal portion of the chain corresponds to 153–157 (YFGNG). The chain crosses the membrane as a helical span at residues 158–178 (WIPTLITAFVLATSQAQAGWL). Residues 179 to 264 (QHDYGHLSVY…KYLPYNHQHE (86 aa)) lie on the Cytoplasmic side of the membrane. The Histidine box-1 motif lies at 180-184 (HDYGH). The Histidine box-2 signature appears at 217 to 221 (HFQHH). A helical membrane pass occupies residues 265-285 (YFFLIGPPLLIPMYFQYQIIM). Over 286 to 305 (TMIVHKNWVDLAWAISYYIR) the chain is Lumenal. Residues 306-326 (FFVTYIPFYGILGALLFLNFI) traverse the membrane as a helical segment. The Cytoplasmic segment spans residues 327–444 (RFLESHWFVW…KLWLDAYLHK (118 aa)). The Histidine box-3 signature appears at 382–386 (QIEHH).

This sequence belongs to the fatty acid desaturase type 1 family.

The protein localises to the endoplasmic reticulum membrane. It carries out the reaction (9Z,12Z)-octadecadienoyl-CoA + 2 Fe(II)-[cytochrome b5] + O2 + 2 H(+) = (6Z,9Z,12Z)-octadecatrienoyl-CoA + 2 Fe(III)-[cytochrome b5] + 2 H2O. The catalysed reaction is (9Z,12Z,15Z)-octadecatrienoyl-CoA + 2 Fe(II)-[cytochrome b5] + O2 + 2 H(+) = (6Z,9Z,12Z,15Z)-octadecatetraenoyl-CoA + 2 Fe(III)-[cytochrome b5] + 2 H2O. It catalyses the reaction (9Z,12Z,15Z,18Z,21Z)-tetracosapentaenoyl-CoA + 2 Fe(II)-[cytochrome b5] + O2 + 2 H(+) = (6Z,9Z,12Z,15Z,18Z,21Z)-tetracosahexaenoyl-CoA + 2 Fe(III)-[cytochrome b5] + 2 H2O. The enzyme catalyses (11E)-octadecenoyl-CoA + 2 Fe(II)-[cytochrome b5] + O2 + 2 H(+) = (6Z,11E)-octadecadienoyl-CoA + 2 Fe(III)-[cytochrome b5] + 2 H2O. It carries out the reaction (11Z,14Z)-eicosadienoyl-CoA + 2 Fe(II)-[cytochrome b5] + O2 + 2 H(+) = (8Z,11Z,14Z)-eicosatrienoyl-CoA + 2 Fe(III)-[cytochrome b5] + 2 H2O. The catalysed reaction is (11Z,14Z,17Z)-eicosatrienoyl-CoA + 2 Fe(II)-[cytochrome b5] + O2 + 2 H(+) = (8Z,11Z,14Z,17Z)-eicosatetraenoyl-CoA + 2 Fe(III)-[cytochrome b5] + 2 H2O. Its pathway is lipid metabolism; polyunsaturated fatty acid biosynthesis. In terms of biological role, involved in the biosynthesis of highly unsaturated fatty acids (HUFA) from the essential polyunsaturated fatty acids (PUFA) linoleic acid (LA) (18:2n-6) and alpha-linolenic acid (ALA) (18:3n-3) precursors, acting as a fatty acyl-coenzyme A (CoA) desaturase that introduces a cis double bond at carbon 6 of the fatty acyl chain. Catalyzes the first and rate limiting step in this pathway which is the desaturation of LA (18:2n-6) and ALA (18:3n-3) into gamma-linoleate (GLA) (18:3n-6) and stearidonate (18:4n-3), respectively. Subsequently, in the biosynthetic pathway of HUFA n-3 series, it desaturates tetracosapentaenoate (24:5n-3) to tetracosahexaenoate (24:6n-3), which is then converted to docosahexaenoate (DHA)(22:6n-3), an important lipid for nervous system function. It can also desaturate (11E)-octadecenoate (trans-vaccenoate) at carbon 6 generating (6Z,11E)-octadecadienoate. In addition to Delta-6 activity, this enzyme exhibits Delta-8 activity with slight biases toward n-3 fatty acyl-CoA substrates. The sequence is that of Acyl-CoA 6-desaturase (FADS2) from Macaca fascicularis (Crab-eating macaque).